The following is a 707-amino-acid chain: MSPHGDGRGQAQGRAVRVGLRRSGGIRGGVAVFAAVAAVFTFTLPPSVPGGDSGELITAAHELGVAHPPGYPLFTLVAKLAITLFPFGSIAYRVNLLCGLFGAVAASLLFFTVFRLSGSSAGGILAAGVFSFSRLTWQWSIAAEVFSLNNLFVGLLMALTVHFEEAATAKERSKVAKIGAFCCGLSLCNQHTIILYVLCIIPWILFQLLKKKELSLGSLLKLSLYFSAGLLPYVHLPISSYLNHARWTWGDQTTLQGFLTHFLREEYGTFSLAKSEIGSSMSEILLSQVTNMRTELSFNIQALAVCANICLATKDRQNPSLVWLFTGMFCIYSLFFAWRANLDISKPLFMGVVERFWMQSNAVVAVLAGIGLAAVVSETNRVLNSNGLQCLEWLSATLFVVYQIYSNYSVCDQRTNYVIDKFAKNLLTSMPHDAIILLRGDLPGNSLRYMHYCEGLRPDISLVDQEMMTYEWYLPKMAKHLPGVNFPGNRWNPVEGILPSGMVTFNLYHFLEVNKQKETFVCIGIHEGDPTWKKNYSLWPWGSCDKLVPLEIVFNPEEWIKLTKSIYNWTEEYGRFDPSSWESVANEEMWQARMKTPFFIFNLAETAHMPSKVKAQLYAQAYDLYKEIVYLQKEHPVNWHKNYAIACERMLRLQARDADPEVLLSETIRHFRLYSQKAPNDPQQADILGALKHLRKELQSLRNRKNV.

8 helical membrane passes run 28 to 48, 71 to 91, 94 to 114, 141 to 161, 189 to 209, 222 to 242, 318 to 338, and 356 to 376; these read GGVAVFAAVAAVFTFTLPPSV, YPLFTLVAKLAITLFPFGSIA, VNLLCGLFGAVAASLLFFTVF, IAAEVFSLNNLFVGLLMALTV, NQHTIILYVLCIIPWILFQLL, LSLYFSAGLLPYVHLPISSYL, NPSLVWLFTGMFCIYSLFFAW, and FWMQSNAVVAVLAGIGLAAVV. The Lumenal portion of the chain corresponds to 377-707; that stretch reads SETNRVLNSN…LQSLRNRKNV (331 aa). 3 N-linked (GlcNAc...) asparagine glycosylation sites follow: N407, N535, and N568.

It belongs to the glycosyltransferase 117 (GT117) family. As to expression, expressed in brain, heart, kidney, liver, lung, pancreas and placenta but are not detected in skeletal muscle.

Its subcellular location is the endoplasmic reticulum membrane. The protein resides in the membrane. It catalyses the reaction a di-trans,poly-cis-dolichyl beta-D-mannosyl phosphate + L-seryl-[protein] = 3-O-(alpha-D-mannosyl)-L-seryl-[protein] + a di-trans,poly-cis-dolichyl phosphate + H(+). The enzyme catalyses a di-trans,poly-cis-dolichyl beta-D-mannosyl phosphate + L-threonyl-[protein] = 3-O-(alpha-D-mannosyl)-L-threonyl-[protein] + a di-trans,poly-cis-dolichyl phosphate + H(+). O-mannosyl-transferase that transfers mannosyl residues to the hydroxyl group of serine or threonine residues of proteins. Specifically glycosylates the IPT/TIG domain of target proteins, such as MET and MST1R/RON. TMEM260-mediated O-mannosylated residues are composed of single mannose glycans that are not elongated or modified. The protein is Protein O-mannosyl-transferase TMEM260 of Homo sapiens (Human).